The sequence spans 212 residues: Thiamine-phosphate synthase (212 aa).

4-amino-2-methyl-5-(diphosphooxymethyl)pyrimidine-binding positions include 40 to 44 (QFREK) and Asn-75. Mg(2+) contacts are provided by Asp-76 and Asp-95. Ser-113 is a 4-amino-2-methyl-5-(diphosphooxymethyl)pyrimidine binding site. A 2-[(2R,5Z)-2-carboxy-4-methylthiazol-5(2H)-ylidene]ethyl phosphate-binding site is contributed by 139–141 (TTS). Lys-142 contributes to the 4-amino-2-methyl-5-(diphosphooxymethyl)pyrimidine binding site. 2-[(2R,5Z)-2-carboxy-4-methylthiazol-5(2H)-ylidene]ethyl phosphate-binding positions include Gly-171 and 191–192 (IS).

Belongs to the thiamine-phosphate synthase family. Requires Mg(2+) as cofactor.

It carries out the reaction 2-[(2R,5Z)-2-carboxy-4-methylthiazol-5(2H)-ylidene]ethyl phosphate + 4-amino-2-methyl-5-(diphosphooxymethyl)pyrimidine + 2 H(+) = thiamine phosphate + CO2 + diphosphate. It catalyses the reaction 2-(2-carboxy-4-methylthiazol-5-yl)ethyl phosphate + 4-amino-2-methyl-5-(diphosphooxymethyl)pyrimidine + 2 H(+) = thiamine phosphate + CO2 + diphosphate. The enzyme catalyses 4-methyl-5-(2-phosphooxyethyl)-thiazole + 4-amino-2-methyl-5-(diphosphooxymethyl)pyrimidine + H(+) = thiamine phosphate + diphosphate. It functions in the pathway cofactor biosynthesis; thiamine diphosphate biosynthesis; thiamine phosphate from 4-amino-2-methyl-5-diphosphomethylpyrimidine and 4-methyl-5-(2-phosphoethyl)-thiazole: step 1/1. Functionally, condenses 4-methyl-5-(beta-hydroxyethyl)thiazole monophosphate (THZ-P) and 2-methyl-4-amino-5-hydroxymethyl pyrimidine pyrophosphate (HMP-PP) to form thiamine monophosphate (TMP). In Staphylococcus saprophyticus subsp. saprophyticus (strain ATCC 15305 / DSM 20229 / NCIMB 8711 / NCTC 7292 / S-41), this protein is Thiamine-phosphate synthase.